We begin with the raw amino-acid sequence, 2615 residues long: Probable serine/threonine-protein kinase roco7 (2615 aa).

The segment covering 1 to 13 (MDGYSSLSSSGNS) has biased composition (low complexity). Disordered stretches follow at residues 1 to 35 (MDGY…NYNQ), 275 to 297 (STPT…NSNN), 533 to 623 (QNIN…GGLN), and 946 to 998 (SSSS…ISEQ). 3 stretches are compositionally biased toward low complexity: residues 533–560 (QNIN…SSRS), 567–614 (NSST…NNNN), and 946–996 (SSSS…SNIS). The 191-residue stretch at 1441–1631 (SVKEAYARNK…LCIWQNGMVL (191 aa)) folds into the COR domain. A Protein kinase domain is found at 1775-2042 (LKFGPQLGSG…ERLSTMQKTF (268 aa)). Residues 1781–1789 (LGSGSYANV) and Lys-1802 contribute to the ATP site. Catalysis depends on Asp-1899, which acts as the Proton acceptor. Disordered stretches follow at residues 2061 to 2158 (QINQ…SHSG) and 2176 to 2209 (GIGS…YESG). Low complexity-rich tracts occupy residues 2073-2158 (SQAA…SHSG) and 2182-2209 (NQHQ…YESG). WD repeat units follow at residues 2491 to 2527 (GIIK…LVWD) and 2533 to 2574 (RMVQ…TTYS).

It belongs to the protein kinase superfamily. TKL Ser/Thr protein kinase family. ROCO subfamily.

The enzyme catalyses L-seryl-[protein] + ATP = O-phospho-L-seryl-[protein] + ADP + H(+). It catalyses the reaction L-threonyl-[protein] + ATP = O-phospho-L-threonyl-[protein] + ADP + H(+). In Dictyostelium discoideum (Social amoeba), this protein is Probable serine/threonine-protein kinase roco7 (roco7).